The following is a 290-amino-acid chain: MKKIWIGMLAAAVLLLMVPKVSLADAAVGDVIVTLGADLSESDKQKVLDEMNVPDNATTVTVTNKEEHEYLGKYISNAQIGSRAISSSSITIAKKGSGLNVETHNISGITDEMYLNALMTAGVKDAKVYVTAPFEVSGTAALTGLIKAYEVSSDEAISEDVKQVANQELVTTSELGDKIGNENAAALIAKIKEEFAKNGVPDNKADIEKQVDDAASDLNVTLTDSQKNQLVSLFNKMKNADIDWGQVSDQLDKAKDKITKFIESDEGKNFIQKVIDFFVSIWNAIVSIFK.

It is found in the cell membrane. The protein resides in the membrane raft. This is an uncharacterized protein from Bacillus subtilis (strain 168).